The primary structure comprises 238 residues: MGRKWANIVAKKTAKDGATSKIYAKFGVEIYAAAKQGEPDPELNTSLKFVIERAKQAQVPKHVIDKAIDKAKGGGDETFVQGRYEGFGPNGSMIIAETLTSNVNRTIANVRTIFNKKGGNIGAAGSVSYMFDNAGVIVFKGSDPDHIFEILLEAEVDVRDVTEEEGNIVIYTEPTDLHKGIAALKAAGITEFSTTELEMIAQSEVELSPEDLEIFEGLVDALEDDDDVQKVYHNVANL.

It belongs to the TACO1 family. YeeN subfamily.

The protein localises to the cytoplasm. In Shigella sonnei (strain Ss046), this protein is Probable transcriptional regulatory protein YeeN.